We begin with the raw amino-acid sequence, 480 residues long: MSKKLYIKTWGCQMNEYDSQKMAELLDSTHGFSLVEEAEQADVILLNTCSIREKAQEKVFHQLGRWKNLKDKKPDLLIGVGGCVASQEGDSIRKRAPFVDMIFGPQTLHRLPEMLNQLQHSKSPIIDVSFPEIEKFDRLPEPKADGASAFVSIMEGCSKYCTFCVVPYTRGEEVSRPLDDVLYEIAQLAEQGVREVNLLGQNVNAYRGETHDGSICRFADLVRLVATIDGIDRIRYTTSHPVEFTDDIIEAYTDVPELVNHLHLPVQSGCDRILTQMKRGHTALEYKSQIRKLKKVRPELSMSSDFIIGFPGETDEDFTATMDLIKAVDFDLSFSFIYSARPGTPAADLPDDISDQTKKDRLKLLQEQITHQALRIARQMLNTEQRVLVEGPSRKNPMELRGKTENNRTVNFVAPHSVIGQFVDIKITDVVANSLRGELVREEKEMGLRIAHSPADILANNHHMATPSNLDELGVGTFTP.

One can recognise an MTTase N-terminal domain in the interval 3-120 (KKLYIKTWGC…LPEMLNQLQH (118 aa)). 6 residues coordinate [4Fe-4S] cluster: C12, C49, C83, C157, C161, and C164. Residues 143 to 375 (KADGASAFVS…QEQITHQALR (233 aa)) form the Radical SAM core domain. Positions 378-441 (RQMLNTEQRV…ANSLRGELVR (64 aa)) constitute a TRAM domain.

Belongs to the methylthiotransferase family. MiaB subfamily. As to quaternary structure, monomer. [4Fe-4S] cluster serves as cofactor.

It localises to the cytoplasm. The enzyme catalyses N(6)-dimethylallyladenosine(37) in tRNA + (sulfur carrier)-SH + AH2 + 2 S-adenosyl-L-methionine = 2-methylsulfanyl-N(6)-dimethylallyladenosine(37) in tRNA + (sulfur carrier)-H + 5'-deoxyadenosine + L-methionine + A + S-adenosyl-L-homocysteine + 2 H(+). Functionally, catalyzes the methylthiolation of N6-(dimethylallyl)adenosine (i(6)A), leading to the formation of 2-methylthio-N6-(dimethylallyl)adenosine (ms(2)i(6)A) at position 37 in tRNAs that read codons beginning with uridine. The chain is tRNA-2-methylthio-N(6)-dimethylallyladenosine synthase from Colwellia psychrerythraea (strain 34H / ATCC BAA-681) (Vibrio psychroerythus).